We begin with the raw amino-acid sequence, 189 residues long: Transcription factor FapR (189 aa).

Belongs to the FapR family.

Functionally, transcriptional factor involved in regulation of membrane lipid biosynthesis by repressing genes involved in fatty acid and phospholipid metabolism. This chain is Transcription factor FapR, found in Listeria monocytogenes serotype 4a (strain HCC23).